A 379-amino-acid chain; its full sequence is Cytochrome b (379 aa).

Transmembrane regions (helical) follow at residues 33-53 (FGSLLGMCLMIQILTGLFLAM), 77-98 (WLIRYLHANGASMFFICLFIHV), 113-133 (WNIGIILFFTTMATAFVGYVL), and 178-198 (FFAFHFILPFIITAFVLVHLL). 2 residues coordinate heme b: H83 and H97. Residues H182 and H196 each contribute to the heme b site. A ubiquinone is bound at residue H201. The next 4 membrane-spanning stretches (helical) occupy residues 226–246 (IKDLLGILFLLMALMILALFF), 288–308 (LGGVLALLLSILILMAFPLLN), 320–340 (ITQIIYWILIANLLVLTWIGG), and 347–367 (FTMIGQIASITYFTIILILMP).

This sequence belongs to the cytochrome b family. In terms of assembly, the cytochrome bc1 complex contains 11 subunits: 3 respiratory subunits (MT-CYB, CYC1 and UQCRFS1), 2 core proteins (UQCRC1 and UQCRC2) and 6 low-molecular weight proteins (UQCRH/QCR6, UQCRB/QCR7, UQCRQ/QCR8, UQCR10/QCR9, UQCR11/QCR10 and a cleavage product of UQCRFS1). This cytochrome bc1 complex then forms a dimer. Requires heme b as cofactor.

It localises to the mitochondrion inner membrane. Functionally, component of the ubiquinol-cytochrome c reductase complex (complex III or cytochrome b-c1 complex) that is part of the mitochondrial respiratory chain. The b-c1 complex mediates electron transfer from ubiquinol to cytochrome c. Contributes to the generation of a proton gradient across the mitochondrial membrane that is then used for ATP synthesis. The protein is Cytochrome b (MT-CYB) of Akodon dayi (Day's grass mouse).